The primary structure comprises 1296 residues: Phosphoribosylformylglycinamidine synthase (1296 aa).

Positions 304-323 (WPGAATGSGGEIRDEGATGR) are disordered. ATP contacts are provided by residues 306–317 (GAATGSGGEIRD) and Ala677. Residues Asp678, Glu717, Asn721, and Asp885 each coordinate Mg(2+). Residue Ser887 participates in ATP binding. Basic and acidic residues predominate over residues 1000 to 1013 (PDCADQEHQAKQDE). Positions 1000 to 1019 (PDCADQEHQAKQDESDPGLN) are disordered. The Glutamine amidotransferase type-1 domain maps to 1043–1296 (VAVLREQGVN…MFRNARKQLG (254 aa)). The Nucleophile role is filled by Cys1136. Catalysis depends on residues His1261 and Glu1263.

The protein in the N-terminal section; belongs to the FGAMS family. As to quaternary structure, monomer.

The protein resides in the cytoplasm. The enzyme catalyses N(2)-formyl-N(1)-(5-phospho-beta-D-ribosyl)glycinamide + L-glutamine + ATP + H2O = 2-formamido-N(1)-(5-O-phospho-beta-D-ribosyl)acetamidine + L-glutamate + ADP + phosphate + H(+). It functions in the pathway purine metabolism; IMP biosynthesis via de novo pathway; 5-amino-1-(5-phospho-D-ribosyl)imidazole from N(2)-formyl-N(1)-(5-phospho-D-ribosyl)glycinamide: step 1/2. In terms of biological role, phosphoribosylformylglycinamidine synthase involved in the purines biosynthetic pathway. Catalyzes the ATP-dependent conversion of formylglycinamide ribonucleotide (FGAR) and glutamine to yield formylglycinamidine ribonucleotide (FGAM) and glutamate. In Yersinia pseudotuberculosis serotype I (strain IP32953), this protein is Phosphoribosylformylglycinamidine synthase.